A 357-amino-acid polypeptide reads, in one-letter code: MRRTGPEEEACGVWLDAAALKRRKVQTHLIKPGTKMLTLLPGERKANIYFTQRRAPSTGIHQRSIASFFTLQPGKTNGSDQKSVSSHTESQINKESKKNATQLDHLIPGLAHDCMASPLATSTTADIQEAGLSPQSLQTSGHHRMKTPFSTELSLLQPDTPDCAGDSHTPLAFSFTEDLESSCLLDRKEEKGDSARKWEWLHESKKNYQSMEKHTKLPGDKCCQPLGKTKLERKVSAKENRQAPVLLQTYRESWNGENIESVKQSRSPVSVFSWDNEKNDKDSWSQLFTEDSQGQRVIAHNTRAPFQDVTNNWNWDLGPFPNSPWAQCQEDGPTQNLKPDLLFTQDSEGNQVIRHQF.

Residues 71-91 (LQPGKTNGSDQKSVSSHTESQ) are compositionally biased toward polar residues. Positions 71-98 (LQPGKTNGSDQKSVSSHTESQINKESKK) are disordered. An interaction with AURKA region spans residues 187–357 (RKEEKGDSAR…EGNQVIRHQF (171 aa)). A phosphoserine mark is found at S267 and S292. The tract at residues 281–357 (KDSWSQLFTE…EGNQVIRHQF (77 aa)) is interaction with RBBP8/CtIP.

Belongs to the AUNIP family. In terms of assembly, interacts (via C-terminus) with AURKA (via C-terminus). Interacts (via N-terminus) with NIN; this interaction blocks NIN phosphorylation by both AURKA and GSK3B. Identified in a complex with NIN and AURKA. Interacts with RBBP8/CtIP. In terms of tissue distribution, expressed in heart, skeletal muscles, placenta and testis.

The protein localises to the nucleus. Its subcellular location is the chromosome. The protein resides in the cytoplasm. It is found in the cytoskeleton. It localises to the microtubule organizing center. The protein localises to the centrosome. Its subcellular location is the spindle pole. In terms of biological role, DNA-binding protein that accumulates at DNA double-strand breaks (DSBs) following DNA damage and promotes DNA resection and homologous recombination. Serves as a sensor of DNA damage: binds DNA with a strong preference for DNA substrates that mimic structures generated at stalled replication forks, and anchors RBBP8/CtIP to DSB sites to promote DNA end resection and ensuing homologous recombination repair. Inhibits non-homologous end joining (NHEJ). Required for the dynamic movement of AURKA at the centrosomes and spindle apparatus during the cell cycle. This is Aurora kinase A- and ninein-interacting protein from Homo sapiens (Human).